A 292-amino-acid chain; its full sequence is Inositol oxygenase (292 aa).

Residues arginine 33 and 88-90 (DES) each bind substrate. Residues histidine 101, histidine 128, and aspartate 129 each coordinate Fe cation. Substrate contacts are provided by residues lysine 132 and 149-150 (GD). 3 residues coordinate Fe cation: histidine 201, histidine 227, and aspartate 260. 227-228 (HS) serves as a coordination point for substrate.

It belongs to the myo-inositol oxygenase family. It depends on Fe cation as a cofactor.

It is found in the cytoplasm. It catalyses the reaction myo-inositol + O2 = D-glucuronate + H2O + H(+). Its pathway is polyol metabolism; myo-inositol degradation into D-glucuronate; D-glucuronate from myo-inositol: step 1/1. The protein is Inositol oxygenase (miox) of Dictyostelium discoideum (Social amoeba).